The following is a 1068-amino-acid chain: MAGNEWINGYLEAILDSHTSSRGAGGGGGGGDPRSPTKAASPRGAHMNFNPSHYFVEEVVKGVDESDLHRTWIKVVATRNARERSTRLENMCWRIWHLARKKKQLELEGIQRISARRKEQEQVRREATEDLAEDLSEGEKGDTIGELAPVETTKKKFQRNFSDLTVWSDDNKEKKLYIVLISVHGLVRGENMELGRDSDTGGQVKYVVELARAMSMMPGVYRVDLFTRQVSSPDVDWSYGEPTEMLCAGSNDGEGMGESGGAYIVRIPCGPRDKYLKKEALWPYLQEFVDGALAHILNMSKALGEQVGNGRPVLPYVIHGHYADAGDVAALLSGALNVPMVLTGHSLGRNKLEQLLKQGRMSKEEIDSTYKIMRRIEGEELALDASELVITSTRQEIDEQWGLYDGFDVKLEKVLRARARRGVSCHGRYMPRMVVIPPGMDFSNVVVHEDIDGDGDVKDDIVGLEGASPKSMPPIWAEVMRFLTNPHKPMILALSRPDPKKNITTLVKAFGECRPLRELANLTLIMGNRDDIDDMSAGNASVLTTVLKLIDKYDLYGSVAFPKHHNQADVPEIYRLAAKMKGVFINPALVEPFGLTLIEAAAHGLPIVATKNGGPVDITNALNNGLLVDPHDQNAIADALLKLVADKNLWQECRRNGLRNIHLYSWPEHCRTYLTRVAGCRLRNPRWLKDTPADAGADEEEFLEDSMDAQDLSLRLSIDGEKSSLNTNDPLWFDPQDQVQKIMNNIKQSSALPPSMSSVAAEGTGSTMNKYPLLRRRRRLFVIAVDCYQDDGRASKKMLQVIQEVFRAVRSDSQMFKISGFTLSTAMPLSETLQLLQLGKIPATDFDALICGSGSEVYYPGTANCMDAEGKLRPDQDYLMHISHRWSHDGARQTIAKLMGAQDGSGDAVEQDVASSNAHCVAFLIKDPQKVKTVDEMRERLRMRGLRCHIMYCRNSTRLQVVPLLASRSQALRYLSVRWGVSVGNMYLITGEHGDTDLEEMLSGLHKTVIVRGVTEKGSEALVRSPGSYKRDDVVPSETPLAAYTTGELKADEIMRALKQVSKTSSGM.

2 disordered regions span residues 18-47 (HTSSRGAGGGGGGGDPRSPTKAASPRGAHM) and 118-139 (KEQEQVRREATEDLAEDLSEGE). Residues 23 to 32 (GAGGGGGGGD) show a composition bias toward gly residues. Positions 118 to 128 (KEQEQVRREAT) are enriched in basic and acidic residues.

This sequence belongs to the glycosyltransferase 1 family. Homodimer or homotetramer.

The catalysed reaction is beta-D-fructose 6-phosphate + UDP-alpha-D-glucose = sucrose 6(F)-phosphate + UDP + H(+). Its pathway is glycan biosynthesis; sucrose biosynthesis; sucrose from D-fructose 6-phosphate and UDP-alpha-D-glucose: step 1/2. Activity is regulated by phosphorylation and moderated by concentration of metabolites and light. Plays a role in photosynthetic sucrose synthesis by catalyzing the rate-limiting step of sucrose biosynthesis from UDP-glucose and fructose- 6-phosphate. Involved in the regulation of carbon partitioning in the leaves of plants. May regulate the synthesis of sucrose and therefore play a major role as a limiting factor in the export of photoassimilates out of the leaf. Plays a role for sucrose availability that is essential for plant growth and fiber elongation. The protein is Sucrose-phosphate synthase of Zea mays (Maize).